The chain runs to 125 residues: Photosystem II extrinsic protein U (125 aa).

The first 29 residues, 1–29 (MKRLLSWLTGLVVMAGLLFSLATPSGVQA), serve as a signal peptide directing secretion.

The protein belongs to the PsbU family. As to quaternary structure, PSII is composed of 1 copy each of membrane proteins PsbA, PsbB, PsbC, PsbD, PsbE, PsbF, PsbH, PsbI, PsbJ, PsbK, PsbL, PsbM, PsbT, PsbX, PsbY, PsbZ, Psb30/Ycf12, peripheral proteins PsbO, CyanoQ (PsbQ), PsbU, PsbV and a large number of cofactors. It forms dimeric complexes.

It is found in the cellular thylakoid membrane. Functionally, one of the extrinsic, lumenal subunits of photosystem II (PSII). PSII is a light-driven water plastoquinone oxidoreductase, using light energy to abstract electrons from H(2)O, generating a proton gradient subsequently used for ATP formation. The extrinsic proteins stabilize the structure of photosystem II oxygen-evolving complex (OEC), the ion environment of oxygen evolution and protect the OEC against heat-induced inactivation. In Synechococcus sp. (strain WH7803), this protein is Photosystem II extrinsic protein U.